We begin with the raw amino-acid sequence, 191 residues long: MLLSDRDILVEIDAGRVALEPYDPGMLQPSSIDVRLDRFFRVFENHKYPHIDPAADQSDLTRMVEPEGDEPFILHPGEFVLGSTYEVVTLPDDIAARVEGKSSLGRLGLLTHATAGFVDPGFSGHVTLELANVATLPIKLYPGMKIGQFCFFRLSSPSEHPYGSAKYGSRYQGQRGPTPSRSYQNFHRTPI.

Residues 101 to 106, Asp-119, 127 to 129, Gln-148, Tyr-162, and Gln-174 each bind dCTP; these read KSSLGR and TLE. Residue Glu-129 is the Proton donor/acceptor of the active site. The tract at residues 163–191 is disordered; the sequence is GSAKYGSRYQGQRGPTPSRSYQNFHRTPI. Residues 171–191 are compositionally biased toward polar residues; that stretch reads YQGQRGPTPSRSYQNFHRTPI.

This sequence belongs to the dCTP deaminase family. As to quaternary structure, homotrimer.

It carries out the reaction dCTP + 2 H2O = dUMP + NH4(+) + diphosphate. The protein operates within pyrimidine metabolism; dUMP biosynthesis; dUMP from dCTP: step 1/1. Functionally, bifunctional enzyme that catalyzes both the deamination of dCTP to dUTP and the hydrolysis of dUTP to dUMP without releasing the toxic dUTP intermediate. The sequence is that of dCTP deaminase, dUMP-forming from Nocardioides sp. (strain ATCC BAA-499 / JS614).